The sequence spans 176 residues: Tubulin polymerization-promoting protein family member 3 (176 aa).

Ala2 carries the N-acetylalanine modification. The tract at residues 132 to 152 (TGSHKERFDESGKGKGIAGRQ) is disordered. The segment covering 134–144 (SHKERFDESGK) has biased composition (basic and acidic residues).

It belongs to the TPPP family. In terms of tissue distribution, expressed in endometrium during the mid-secretory phase (LH + 7) (at protein level).

It is found in the cytoplasm. It localises to the cytoskeleton. Regulator of microtubule dynamic that has microtubule bundling activity. Required for embryo implantation; possibly by regulating beta-catenin. Also required for decidualization via regulation of beta-catenin. This chain is Tubulin polymerization-promoting protein family member 3, found in Homo sapiens (Human).